Reading from the N-terminus, the 218-residue chain is 3,4-dihydroxy-2-butanone 4-phosphate synthase (218 aa).

D-ribulose 5-phosphate contacts are provided by residues 37 to 38 (RE), Asp-42, 150 to 154 (RGGHT), and Glu-174. Glu-38 provides a ligand contact to Mg(2+). A Mg(2+)-binding site is contributed by His-153.

Belongs to the DHBP synthase family. Homodimer. The cofactor is Mg(2+). Mn(2+) is required as a cofactor.

The enzyme catalyses D-ribulose 5-phosphate = (2S)-2-hydroxy-3-oxobutyl phosphate + formate + H(+). The protein operates within cofactor biosynthesis; riboflavin biosynthesis; 2-hydroxy-3-oxobutyl phosphate from D-ribulose 5-phosphate: step 1/1. Its function is as follows. Catalyzes the conversion of D-ribulose 5-phosphate to formate and 3,4-dihydroxy-2-butanone 4-phosphate. The protein is 3,4-dihydroxy-2-butanone 4-phosphate synthase of Erwinia tasmaniensis (strain DSM 17950 / CFBP 7177 / CIP 109463 / NCPPB 4357 / Et1/99).